Consider the following 241-residue polypeptide: Uridylate kinase (241 aa).

12-15 (KLSG) contacts ATP. The involved in allosteric activation by GTP stretch occupies residues 20-25 (GDKGTG). Residue G54 participates in UMP binding. G55 and R59 together coordinate ATP. Residues D74 and 135-142 (TGSPYFST) contribute to the UMP site. ATP-binding residues include N163, Y169, and D172.

The protein belongs to the UMP kinase family. As to quaternary structure, homohexamer.

Its subcellular location is the cytoplasm. The catalysed reaction is UMP + ATP = UDP + ADP. It participates in pyrimidine metabolism; CTP biosynthesis via de novo pathway; UDP from UMP (UMPK route): step 1/1. Its activity is regulated as follows. Allosterically activated by GTP. Inhibited by UTP. Catalyzes the reversible phosphorylation of UMP to UDP. The sequence is that of Uridylate kinase from Pediococcus pentosaceus (strain ATCC 25745 / CCUG 21536 / LMG 10740 / 183-1w).